Here is a 176-residue protein sequence, read N- to C-terminus: Transcription factor E (176 aa).

The region spanning 8–90 (NDPVIQKYLH…LWTFHYENIP (83 aa)) is the HTH TFE/IIEalpha-type domain.

Belongs to the TFE family. Monomer. Interaction with RNA polymerase subunits RpoF and RpoE is necessary for Tfe stimulatory transcription activity. Able to interact with Tbp and RNA polymerase in the absence of DNA promoter. Interacts both with the preinitiation and elongation complexes.

In terms of biological role, transcription factor that plays a role in the activation of archaeal genes transcribed by RNA polymerase. Facilitates transcription initiation by enhancing TATA-box recognition by TATA-box-binding protein (Tbp), and transcription factor B (Tfb) and RNA polymerase recruitment. Not absolutely required for transcription in vitro, but particularly important in cases where Tbp or Tfb function is not optimal. It dynamically alters the nucleic acid-binding properties of RNA polymerases by stabilizing the initiation complex and destabilizing elongation complexes. Seems to translocate with the RNA polymerase following initiation and acts by binding to the non template strand of the transcription bubble in elongation complexes. The chain is Transcription factor E from Haloquadratum walsbyi (strain DSM 16790 / HBSQ001).